We begin with the raw amino-acid sequence, 242 residues long: Galectin-3 (242 aa).

The tract at residues 1–35 is disordered; that stretch reads MADGFSLNDALSGSGHPPNQGWPGPWGNQPAGPGG. The residue at position 2 (A2) is an N-acetylalanine. S6 carries the phosphoserine; by CK1 modification. A Phosphoserine modification is found at S12. Positions 17-31 are enriched in low complexity; that stretch reads PPNQGWPGPWGNQPA. Tandem repeats lie at residues 35–43, 44–52, 53–61, and 62–70. A 7 X 9 AA tandem repeats of Y-P-G-X(3)-P-[GS]-A region spans residues 35 to 98; that stretch reads GYPGAAYPGA…GAGAYPGASP (64 aa). The segment at 55–93 is disordered; the sequence is GQAPPGPYPGPGAHGAYPGQPGGPGAYPSPGQPSGAGAY. One copy of the 5; approximate repeat lies at 71–80; that stretch reads YPGQPGGPGA. Low complexity predominate over residues 80-93; sequence AYPSPGQPSGAGAY. The stretch at 81–92 is one 6; approximate repeat; it reads YPSPGQPSGAGA. Residues 93–98 form a 7; truncated repeat; the sequence is YPGASP. The Galectin domain maps to 110–240; that stretch reads YDLPLPGGVM…DIQLTSASHA (131 aa). Position 173-181 (173-181) interacts with a beta-D-galactoside; the sequence is WGREERQTT. A Nuclear export signal motif is present at residues 218–233; it reads RNLKEINKLGISGDIQ.

Probably forms homo- or heterodimers. Interacts with DMBT1. Interacts with CD6 and ALCAM. Forms a complex with the ITGA3, ITGB1 and CSPG4. Interacts with LGALS3BP, LYPD3, ZFTRAF1 and UACA. Interacts with TRIM16; this interaction mediates autophagy of damage endomembranes. Interacts with cargo receptor TMED10; the interaction mediates the translocation from the cytoplasm into the ERGIC (endoplasmic reticulum-Golgi intermediate compartment) and thereby secretion. Interacts with and inhibits by binding NCR3/NKp30.

It localises to the cytoplasm. The protein localises to the nucleus. Its subcellular location is the secreted. Galactose-specific lectin which binds IgE. May mediate with the alpha-3, beta-1 integrin the stimulation by CSPG4 of endothelial cells migration. Together with DMBT1, required for terminal differentiation of columnar epithelial cells during early embryogenesis. In the nucleus: acts as a pre-mRNA splicing factor. Involved in acute inflammatory responses including neutrophil activation and adhesion, chemoattraction of monocytes macrophages, opsonization of apoptotic neutrophils, and activation of mast cells. Together with TRIM16, coordinates the recognition of membrane damage with mobilization of the core autophagy regulators ATG16L1 and BECN1 in response to damaged endomembranes. When secreted, interacts with NK cell-activating receptor NCR3/NKp30 acting as an inhibitory ligand which antagonizes NK cell attack. This Oryctolagus cuniculus (Rabbit) protein is Galectin-3 (LGALS3).